The sequence spans 308 residues: Aspartate carbamoyltransferase catalytic subunit (308 aa).

Carbamoyl phosphate-binding residues include Arg55 and Thr56. Lys83 provides a ligand contact to L-aspartate. 3 residues coordinate carbamoyl phosphate: Arg105, His133, and Gln136. Arg166 and Arg223 together coordinate L-aspartate. Positions 264 and 265 each coordinate carbamoyl phosphate.

Belongs to the aspartate/ornithine carbamoyltransferase superfamily. ATCase family. As to quaternary structure, heterododecamer (2C3:3R2) of six catalytic PyrB chains organized as two trimers (C3), and six regulatory PyrI chains organized as three dimers (R2).

The catalysed reaction is carbamoyl phosphate + L-aspartate = N-carbamoyl-L-aspartate + phosphate + H(+). It functions in the pathway pyrimidine metabolism; UMP biosynthesis via de novo pathway; (S)-dihydroorotate from bicarbonate: step 2/3. In terms of biological role, catalyzes the condensation of carbamoyl phosphate and aspartate to form carbamoyl aspartate and inorganic phosphate, the committed step in the de novo pyrimidine nucleotide biosynthesis pathway. The sequence is that of Aspartate carbamoyltransferase catalytic subunit from Salinispora arenicola (strain CNS-205).